Consider the following 1031-residue polypeptide: Error-prone DNA polymerase (1031 aa).

Belongs to the DNA polymerase type-C family. DnaE2 subfamily.

The protein localises to the cytoplasm. The enzyme catalyses DNA(n) + a 2'-deoxyribonucleoside 5'-triphosphate = DNA(n+1) + diphosphate. Its function is as follows. DNA polymerase involved in damage-induced mutagenesis and translesion synthesis (TLS). It is not the major replicative DNA polymerase. The polypeptide is Error-prone DNA polymerase (Pseudomonas syringae pv. syringae (strain B728a)).